The primary structure comprises 561 residues: Dihydroxy-acid dehydratase (561 aa).

A [2Fe-2S] cluster-binding site is contributed by cysteine 50. A Mg(2+)-binding site is contributed by aspartate 82. Cysteine 123 contacts [2Fe-2S] cluster. Residues aspartate 124 and lysine 125 each coordinate Mg(2+). Lysine 125 bears the N6-carboxylysine mark. Cysteine 195 contributes to the [2Fe-2S] cluster binding site. Position 447 (glutamate 447) interacts with Mg(2+). The active-site Proton acceptor is serine 473.

It belongs to the IlvD/Edd family. As to quaternary structure, homodimer. The cofactor is [2Fe-2S] cluster. Mg(2+) serves as cofactor.

The catalysed reaction is (2R)-2,3-dihydroxy-3-methylbutanoate = 3-methyl-2-oxobutanoate + H2O. It carries out the reaction (2R,3R)-2,3-dihydroxy-3-methylpentanoate = (S)-3-methyl-2-oxopentanoate + H2O. It functions in the pathway amino-acid biosynthesis; L-isoleucine biosynthesis; L-isoleucine from 2-oxobutanoate: step 3/4. Its pathway is amino-acid biosynthesis; L-valine biosynthesis; L-valine from pyruvate: step 3/4. Its function is as follows. Functions in the biosynthesis of branched-chain amino acids. Catalyzes the dehydration of (2R,3R)-2,3-dihydroxy-3-methylpentanoate (2,3-dihydroxy-3-methylvalerate) into 2-oxo-3-methylpentanoate (2-oxo-3-methylvalerate) and of (2R)-2,3-dihydroxy-3-methylbutanoate (2,3-dihydroxyisovalerate) into 2-oxo-3-methylbutanoate (2-oxoisovalerate), the penultimate precursor to L-isoleucine and L-valine, respectively. In Microcystis aeruginosa (strain NIES-843 / IAM M-2473), this protein is Dihydroxy-acid dehydratase.